A 143-amino-acid polypeptide reads, in one-letter code: Ribosome maturation factor RimP (143 aa).

It belongs to the RimP family.

It localises to the cytoplasm. In terms of biological role, required for maturation of 30S ribosomal subunits. This chain is Ribosome maturation factor RimP, found in Neisseria meningitidis serogroup C / serotype 2a (strain ATCC 700532 / DSM 15464 / FAM18).